The sequence spans 177 residues: Alkyl hydroperoxide reductase AhpD (177 aa).

Catalysis depends on cysteine 131, which acts as the Proton donor. An intrachain disulfide couples cysteine 131 to cysteine 134. Cysteine 134 serves as the catalytic Cysteine sulfenic acid (-SOH) intermediate.

Belongs to the AhpD family. As to quaternary structure, homotrimer.

It carries out the reaction N(6)-[(R)-dihydrolipoyl]-L-lysyl-[lipoyl-carrier protein] + a hydroperoxide = N(6)-[(R)-lipoyl]-L-lysyl-[lipoyl-carrier protein] + an alcohol + H2O. Functionally, antioxidant protein with alkyl hydroperoxidase activity. Required for the reduction of the AhpC active site cysteine residues and for the regeneration of the AhpC enzyme activity. The sequence is that of Alkyl hydroperoxide reductase AhpD from Streptomyces avermitilis (strain ATCC 31267 / DSM 46492 / JCM 5070 / NBRC 14893 / NCIMB 12804 / NRRL 8165 / MA-4680).